We begin with the raw amino-acid sequence, 197 residues long: dTTP/UTP pyrophosphatase (197 aa).

Asp-70 (proton acceptor) is an active-site residue.

Belongs to the Maf family. YhdE subfamily. A divalent metal cation serves as cofactor.

The protein resides in the cytoplasm. It carries out the reaction dTTP + H2O = dTMP + diphosphate + H(+). The enzyme catalyses UTP + H2O = UMP + diphosphate + H(+). Functionally, nucleoside triphosphate pyrophosphatase that hydrolyzes dTTP and UTP. May have a dual role in cell division arrest and in preventing the incorporation of modified nucleotides into cellular nucleic acids. This is dTTP/UTP pyrophosphatase (yceF2) from Shigella boydii serotype 4 (strain Sb227).